Reading from the N-terminus, the 394-residue chain is 3-ketosteroid-9-alpha-monooxygenase, oxygenase component (394 aa).

A Rieske domain is found at Trp-27–Val-129. [2Fe-2S] cluster-binding residues include Cys-68, His-70, Cys-87, and His-90. Residues Asn-175, His-181, and His-186 each coordinate Fe cation. Tyr-245 is a binding site for substrate. Asp-305 lines the Fe cation pocket.

As to quaternary structure, homotrimer. The two-component system 3-ketosteroid-9-alpha-monooxygenase is composed of an oxygenase component KshA and a reductase component KshB. Requires [2Fe-2S] cluster as cofactor. It depends on Fe cation as a cofactor.

It catalyses the reaction androsta-1,4-diene-3,17-dione + 2 reduced [2Fe-2S]-[ferredoxin] + O2 + 2 H(+) = 9alpha-hydroxyandrosta-1,4-diene-3,17-dione + 2 oxidized [2Fe-2S]-[ferredoxin] + H2O. Functionally, may be involved in the degradation of cholic acid, a steroid acid found predominantly in the bile. In vitro, catalyzes the introduction of a 9alpha-hydroxyl moiety into the ring B of 3-ketosteroid substrates such as 1,4-androstadiene-3,17-dione (ADD), 4-androstene-3,17-dione (AD), 4-androstene-17beta-ol-3-one (testosterone), 4-pregnene-3,20-dione (progesterone), 3-oxo-23,24-bisnorcholesta-4-en-22-oate (4-BNC), 23,24-bisnorcholesta-4-ene-22-oate, 3-oxo-23,24-bisnorcholaesta-1,4-dien-22-oate (1,4-BNC), 23,24-bisnorcholesta-1,4-diene-22-oate and 3-oxo-23,24-bisnorcholesta-1,4-dien-22-oyl-coenzyme A thioester (1,4-BNC-CoA). KshA1 has the highest specificity for steroids possessing an isopropionyl side chain at C17. The polypeptide is 3-ketosteroid-9-alpha-monooxygenase, oxygenase component (Rhodococcus rhodochrous).